We begin with the raw amino-acid sequence, 501 residues long: 7-alpha-hydroxycholest-4-en-3-one 12-alpha-hydroxylase (501 aa).

A helical transmembrane segment spans residues 1-21 (MVLWGPVLGALLVVIAGYLCL). At S326 the chain carries Phosphoserine. C440 lines the heme pocket.

Belongs to the cytochrome P450 family. The cofactor is heme. In terms of tissue distribution, liver.

The protein localises to the endoplasmic reticulum membrane. It is found in the microsome membrane. It catalyses the reaction 7alpha-hydroxycholest-4-en-3-one + reduced [NADPH--hemoprotein reductase] + O2 = 7alpha,12alpha-dihydroxycholest-4-en-3-one + oxidized [NADPH--hemoprotein reductase] + H2O + H(+). The catalysed reaction is 5beta-cholestane-3alpha,7alpha-diol + reduced [NADPH--hemoprotein reductase] + O2 = 5beta-cholestane-3alpha,7alpha,12alpha-triol + oxidized [NADPH--hemoprotein reductase] + H2O + H(+). The enzyme catalyses chenodeoxycholate + reduced [NADPH--hemoprotein reductase] + O2 = cholate + oxidized [NADPH--hemoprotein reductase] + H2O + H(+). Its pathway is lipid metabolism; bile acid biosynthesis. Functionally, a cytochrome P450 monooxygenase involved in primary bile acid biosynthesis. Catalyzes the 12alpha-hydroxylation of 7alpha-hydroxy-4-cholesten-3-one, an intermediate metabolite in cholic acid biosynthesis. Controls biliary balance of cholic acid and chenodeoxycholic acid, ultimately regulating the intestinal absorption of dietary lipids. Mechanistically, uses molecular oxygen inserting one oxygen atom into a substrate, and reducing the second into a water molecule, with two electrons provided by NADPH via cytochrome P450 reductase (CPR; NADPH--hemoprotein reductase). In Homo sapiens (Human), this protein is 7-alpha-hydroxycholest-4-en-3-one 12-alpha-hydroxylase.